We begin with the raw amino-acid sequence, 389 residues long: Transmembrane protease serine 11A (389 aa).

The Cytoplasmic portion of the chain corresponds to 1 to 23; sequence MEVAGYGTHNRDLKQWMVTLLSA. The helical; Signal-anchor for type II membrane protein transmembrane segment at 24–44 threads the bilayer; the sequence is LSLMMVVVTIGLLALFLVFDI. An SEA domain is found at 31-148; that stretch reads VTIGLLALFL…SLVQVKDCGK (118 aa). At 45–389 the chain is on the extracellular side; the sequence is QVNSNSGQKS…RHWIASKTGL (345 aa). The region spanning 158–388 is the Peptidase S1 domain; that stretch reads IVSGNPAAKG…YRHWIASKTG (231 aa). Cys-183 and Cys-199 are joined by a disulfide. Residues His-198 and Asp-243 each act as charge relay system in the active site. N-linked (GlcNAc...) asparagine glycosylation occurs at Asn-274. 2 cysteine pairs are disulfide-bonded: Cys-308/Cys-324 and Cys-335/Cys-364. The Charge relay system role is filled by Ser-339.

The protein belongs to the peptidase S1 family.

The protein localises to the membrane. In terms of biological role, probable serine protease which may play a role in cellular senescence. Overexpression inhibits cell growth and induce G1 cell cycle arrest. The protein is Transmembrane protease serine 11A (Tmprss11a) of Mus musculus (Mouse).